Here is a 334-residue protein sequence, read N- to C-terminus: Cytochrome c biogenesis protein CcsA (334 aa).

8 helical membrane-spanning segments follow: residues N12–P32, W35–L55, I67–I87, F96–L116, V141–F161, I242–N262, W277–W297, and A303–L323.

Belongs to the CcmF/CycK/Ccl1/NrfE/CcsA family. May interact with ccs1.

The protein resides in the cellular thylakoid membrane. Its function is as follows. Required during biogenesis of c-type cytochromes (cytochrome c6 and cytochrome f) at the step of heme attachment. The chain is Cytochrome c biogenesis protein CcsA from Synechocystis sp. (strain ATCC 27184 / PCC 6803 / Kazusa).